We begin with the raw amino-acid sequence, 150 residues long: Ribosome maturation factor RimP (150 aa).

It belongs to the RimP family.

The protein localises to the cytoplasm. Required for maturation of 30S ribosomal subunits. This Methylococcus capsulatus (strain ATCC 33009 / NCIMB 11132 / Bath) protein is Ribosome maturation factor RimP.